Reading from the N-terminus, the 452-residue chain is Retinoid-inducible serine carboxypeptidase (452 aa).

Residues 1-28 (MELSRRICLVRLWLLLLSFLLGFSAGSA) form the signal peptide. 3 N-linked (GlcNAc...) asparagine glycosylation sites follow: N64, N102, and N126. Residue S167 is part of the active site. Residues N192 and N362 are each glycosylated (N-linked (GlcNAc...) asparagine). Residues D371 and H431 contribute to the active site.

The protein belongs to the peptidase S10 family.

The protein resides in the secreted. Its function is as follows. May be involved in vascular wall and kidney homeostasis. The chain is Retinoid-inducible serine carboxypeptidase (Scpep1) from Mus musculus (Mouse).